The primary structure comprises 185 residues: MKKTALDIIEHAEEHLIEKIAENMHTFGMPSTVGRVLGIIYMNRKPMTLSELSEATGMSKTRMSQVVREMIDANIAEKVFEKGVRKDLYDVEQDYYQTFISLFAANWTKVVSKNKVLYKKLNRELSDLLQRDGLTPEAEEKVNQLLNELKEWLHYYDWLSRLIEFFESEEVFRYVPKTKECSSLK.

The H-T-H motif DNA-binding region spans 49 to 73; sequence LSELSEATGMSKTRMSQVVREMIDA.

The protein belongs to the GbsR family.

Is not choline-responsive. Negatively regulates the transcription of the opuC operon. In the absence of GbsR, is also a negative regulator of the opuB operon. Binds to an inverted repeat in the promoter region of the operons. This is HTH-type transcriptional repressor OpcR (opcR) from Bacillus subtilis (strain 168).